The chain runs to 203 residues: ESCRT-related protein CHMP1B (203 aa).

2 coiled-coil regions span residues 13–51 (DLKF…MDGA) and 109–140 (GNLQ…NAMA). Positions 172–203 (PQPAGHAIPTKTEEKVDEDDLSRRLAELKARG) are disordered. Positions 192 to 203 (LSRRLAELKARG) are enriched in basic and acidic residues.

Belongs to the SNF7 family. Interacts with CHMP1A and LIP5. Interacts with VPS2.2.

The protein localises to the cytoplasm. The protein resides in the endosome membrane. Its function is as follows. Involved in ESCRT-dependent multivesicular body (MVB) formation and sorting of endosomal cargo proteins into MVBs. Mediates the MVB sorting of the auxin carriers PIN1, PIN2 and AUX1. Required for embryonic axis establishment and seedling growth. Required for autophagic degradation of plastid proteins. Promotes the efficient sequestration of cargo from plastids into autophagosomes. Mediates the efficient delivery of autophagic plastid bodies to the vacuole, but not into the cytoplasm. The protein is ESCRT-related protein CHMP1B of Arabidopsis thaliana (Mouse-ear cress).